A 117-amino-acid polypeptide reads, in one-letter code: Large ribosomal subunit protein bL20 (117 aa).

Belongs to the bacterial ribosomal protein bL20 family.

Its function is as follows. Binds directly to 23S ribosomal RNA and is necessary for the in vitro assembly process of the 50S ribosomal subunit. It is not involved in the protein synthesizing functions of that subunit. This is Large ribosomal subunit protein bL20 from Actinobacillus succinogenes (strain ATCC 55618 / DSM 22257 / CCUG 43843 / 130Z).